We begin with the raw amino-acid sequence, 454 residues long: Na(+)/H(+) antiporter NhaA (454 aa).

Transmembrane regions (helical) follow at residues 22 to 42, 64 to 84, 106 to 126, 150 to 170, 190 to 210, 228 to 248, 284 to 304, 306 to 326, 355 to 375, and 386 to 406; these read ISGL…NLPF, MGLG…TVGL, LCAV…ISLF, GWAV…ALFA, LLAI…YWFL, VPWL…FEAG, PFSA…VHFE, LTLA…LVVG, MFPA…IASL, and ARFG…ILLS.

Belongs to the NhaA Na(+)/H(+) (TC 2.A.33) antiporter family.

It is found in the cell membrane. It catalyses the reaction Na(+)(in) + 2 H(+)(out) = Na(+)(out) + 2 H(+)(in). In terms of biological role, na(+)/H(+) antiporter that extrudes sodium in exchange for external protons. The protein is Na(+)/H(+) antiporter NhaA of Bifidobacterium adolescentis (strain ATCC 15703 / DSM 20083 / NCTC 11814 / E194a).